Reading from the N-terminus, the 159-residue chain is Aspartate carbamoyltransferase regulatory chain (159 aa).

The Zn(2+) site is built by cysteine 111, cysteine 116, cysteine 141, and cysteine 144.

The protein belongs to the PyrI family. In terms of assembly, contains catalytic and regulatory chains. Zn(2+) is required as a cofactor.

Involved in allosteric regulation of aspartate carbamoyltransferase. The polypeptide is Aspartate carbamoyltransferase regulatory chain (Aeropyrum pernix (strain ATCC 700893 / DSM 11879 / JCM 9820 / NBRC 100138 / K1)).